The primary structure comprises 85 residues: Large ribosomal subunit protein bL27 (85 aa).

Positions 1-10 are enriched in gly residues; sequence MAQKKGGGST. Residues 1–21 are disordered; that stretch reads MAQKKGGGSTRNGRDSQPKML.

This sequence belongs to the bacterial ribosomal protein bL27 family.

The protein is Large ribosomal subunit protein bL27 of Leptothrix cholodnii (strain ATCC 51168 / LMG 8142 / SP-6) (Leptothrix discophora (strain SP-6)).